Consider the following 1133-residue polypeptide: Sterol regulatory element-binding protein 1 (1133 aa).

The interval 1–60 (MDELPFGEAAVEQALDELGELDAALLTDIQDMLQLINNQDSDFPGLFDSPYAGGGAGDTE) is transcriptional activation (acidic). At 1–476 (MDELPFGEAA…HSHGMLDRSR (476 aa)) the chain is on the cytoplasmic side. The short motif at 27-35 (TDIQDMLQL) is the 9aaTAD element. The disordered stretch occupies residues 46 to 78 (LFDSPYAGGGAGDTEPTSPGANSPESLSSPASL). A compositionally biased stretch (low complexity) spans 68–78 (SPESLSSPASL). 2 positions are modified to phosphoserine: serine 97 and serine 116. Residues 131–219 (LQPPAAQPSP…PLPASTAPRT (89 aa)) are disordered. The segment covering 165–180 (SLPSGFSGTLPGNTQQ) has biased composition (polar residues). Composition is skewed to low complexity over residues 181-191 (PPSSLSLASAP) and 203-217 (QSSA…STAP). The tract at residues 227–486 (QRVPVVLQPH…LALCALVFLC (260 aa)) is interaction with LMNA. The region spanning 317-367 (EKRTAHNAIEKRYRSSINDKIVELKDLVVGTEAKLNKSAVLRKAIDYIRFL) is the bHLH domain. Phosphoserine; by SIK1 is present on residues serine 331 and serine 332. Residues 367 to 388 (LQHSNQKLKQENLALRNAAHKS) are leucine-zipper. Phosphoserine; by AMPK is present on serine 390. The residue at position 396 (serine 396) is a Phosphoserine; by SIK1. The disordered stretch occupies residues 415–456 (VVDTLTPPPSDAGSPSQSSPLSLGSRGSSSGGSDSEPDSPVF). Positions 425–454 (DAGSPSQSSPLSLGSRGSSSGGSDSEPDSP) are enriched in low complexity. Serine 449 bears the Phosphoserine mark. A helical membrane pass occupies residues 477–497 (LALCALVFLCLTCNPLASLFG). The Lumenal segment spans residues 498–535 (WGIPGPSSASGAHHSSGRSMLEAESRDGSNWTQWLLPP). Residues 536 to 556 (LVWLANGLLVLACLALLFVYG) traverse the membrane as a helical segment. Residues 557–1133 (EPVTRPHTSP…LGGGTTVTSS (577 aa)) are Cytoplasmic-facing. Serine 1046 is modified (phosphoserine).

Belongs to the SREBP family. In terms of assembly, efficient DNA binding of the soluble transcription factor fragment requires dimerization with another bHLH protein. Interacts with CEBPA, the interaction produces a transcriptional synergy. Interacts with LMNA. Forms a tight complex with SCAP, the SCAP-SREBP complex, in the endoplasmic reticulum membrane and the Golgi apparatus. Interacts with PAQR3; the interaction anchors the SCAP-SREBP complex to the Golgi apparatus in low cholesterol conditions. In terms of processing, processed in the Golgi apparatus, releasing the protein from the membrane. At low cholesterol the SCAP-SREBP complex is recruited into COPII vesicles for export from the endoplasmic reticulum. In the Golgi, complex SREBPs are cleaved sequentially by site-1 (MBTPS1, S1P) and site-2 (MBTPS2, S2P) proteases. The first cleavage by site-1 protease occurs within the luminal loop, the second cleavage by site-2 protease occurs within the first transmembrane domain, releasing the transcription factor from the Golgi membrane. Phosphorylated by AMPK, leading to suppress protein processing and nuclear translocation, and repress target gene expression. Phosphorylation at Ser-396 by SIK1 represses activity possibly by inhibiting DNA-binding. Post-translationally, SCAP-free SREBF1 is ubiquitinated by the BCR(ARMC5) complex, leading to its degradation. In terms of processing, ubiquitinated; the nuclear form has a rapid turnover and is rapidly ubiquitinated and degraded by the proteasome in the nucleus.

It is found in the endoplasmic reticulum membrane. Its subcellular location is the golgi apparatus membrane. It localises to the cytoplasmic vesicle. The protein resides in the COPII-coated vesicle membrane. The protein localises to the nucleus. Activation by cleavage is down-regulated upon activation of SIRT3-dependent PRKAA1/AMPK-alpha signaling cascade which leads to inhibition of ATP-consuming lipogenesis to restore cellular energy balance. Its function is as follows. Precursor of the transcription factor form (Processed sterol regulatory element-binding protein 1), which is embedded in the endoplasmic reticulum membrane. Low sterol concentrations promote processing of this form, releasing the transcription factor form that translocates into the nucleus and activates transcription of genes involved in cholesterol biosynthesis and lipid homeostasis. Functionally, key transcription factor that regulates expression of genes involved in cholesterol biosynthesis and lipid homeostasis. Binds to the sterol regulatory element 1 (SRE-1) (5'-ATCACCCCAC-3'). Has dual sequence specificity binding to both an E-box motif (5'-ATCACGTGA-3') and to SRE-1 (5'-ATCACCCCAC-3'). Regulates the promoters of genes involved in cholesterol biosynthesis and the LDL receptor (LDLR) pathway of sterol regulation. This chain is Sterol regulatory element-binding protein 1, found in Cricetulus griseus (Chinese hamster).